We begin with the raw amino-acid sequence, 256 residues long: Nuclear shuttle protein (256 aa).

The Bipartite nuclear localization signal motif lies at 21–42 (NSLIRQQSLFKRNVSKRRPFQT). Positions 81-96 (DIAKSLPNRTRSYIKL) match the Nuclear localization signal motif. Positions 150–187 (ELFGARIHSHGNLAIVPSLKDRFYIRHVLKRVISVEKD) are interaction with Arabidopsis thaliana NSI protein.

This sequence belongs to the begomovirus nuclear shuttle protein family. Binds to single-stranded and double-stranded viral DNA. Interacts with the host nuclear shuttle interacting (NSI) protein. This interaction may allow NSP to recruit NSI monomers to the viral genome and thus regulate nuclear export of viral genome by NSP.

Its subcellular location is the host nucleus. It localises to the host cytoplasm. The protein resides in the host cell membrane. In terms of biological role, binds to the genomic viral ssDNA, shuttles it into and out of the cell nucleus. Begomoviruses use 2 proteins to transport their DNA from cell to cell. The nuclear shuttle protein (NSP) shuttles it between nucleus and cytoplasm and the movement protein (MP) probably transports the DNA-NSP complex to the cell periphery and facilitates movement across the cell wall. The protein is Nuclear shuttle protein of Potato yellow mosaic virus (isolate Venezuela) (PYMV).